Here is a 431-residue protein sequence, read N- to C-terminus: Glucose-1-phosphate adenylyltransferase (431 aa).

Residues Tyr109, Gly175, 190 to 191 (EK), and Ser208 contribute to the alpha-D-glucose 1-phosphate site.

It belongs to the bacterial/plant glucose-1-phosphate adenylyltransferase family. Homotetramer.

The catalysed reaction is alpha-D-glucose 1-phosphate + ATP + H(+) = ADP-alpha-D-glucose + diphosphate. The protein operates within glycan biosynthesis; glycogen biosynthesis. Functionally, involved in the biosynthesis of ADP-glucose, a building block required for the elongation reactions to produce glycogen. Catalyzes the reaction between ATP and alpha-D-glucose 1-phosphate (G1P) to produce pyrophosphate and ADP-Glc. The polypeptide is Glucose-1-phosphate adenylyltransferase (Alteromonas mediterranea (strain DSM 17117 / CIP 110805 / LMG 28347 / Deep ecotype)).